A 350-amino-acid polypeptide reads, in one-letter code: 26S proteasome non-ATPase regulatory subunit 8 (350 aa).

The tract at residues 1–24 is disordered; sequence MFIKGRAPRAPPRERRRATRGGLR. A Phosphoserine modification is found at Ser-106. The PCI domain occupies 162–331; it reads PSFERYMAQL…QQKPEDTTIP (170 aa). Residue Lys-297 forms a Glycyl lysine isopeptide (Lys-Gly) (interchain with G-Cter in SUMO2) linkage.

This sequence belongs to the proteasome subunit S14 family. As to quaternary structure, component of the 19S proteasome regulatory particle complex. The 26S proteasome consists of a 20S core particle (CP) and two 19S regulatory subunits (RP). The regulatory particle is made of a lid composed of 9 subunits including PSMD8, a base containing 6 ATPases and few additional components. Interacts with DDI2. Interacts with TASOR.

Component of the 26S proteasome, a multiprotein complex involved in the ATP-dependent degradation of ubiquitinated proteins. This complex plays a key role in the maintenance of protein homeostasis by removing misfolded or damaged proteins, which could impair cellular functions, and by removing proteins whose functions are no longer required. Therefore, the proteasome participates in numerous cellular processes, including cell cycle progression, apoptosis, or DNA damage repair. The chain is 26S proteasome non-ATPase regulatory subunit 8 (PSMD8) from Homo sapiens (Human).